The primary structure comprises 364 residues: GDSL esterase/lipase 7 (364 aa).

Residues 1 to 19 (MKSLLICLVLLELVWLGNG) form the signal peptide. The Nucleophile role is filled by Ser37. 3 N-linked (GlcNAc...) asparagine glycosylation sites follow: Asn236, Asn237, and Asn264. Catalysis depends on residues Asp329 and His332. A glycan (N-linked (GlcNAc...) asparagine) is linked at Asn351.

Belongs to the 'GDSL' lipolytic enzyme family.

The protein localises to the secreted. In Arabidopsis thaliana (Mouse-ear cress), this protein is GDSL esterase/lipase 7 (GLIP7).